The following is a 198-amino-acid chain: Holliday junction branch migration complex subunit RuvA (198 aa).

The domain I stretch occupies residues 1-63 (MYDYIKGQLT…EDAHLLFGFH (63 aa)). Residues 64–142 (TEDEKDVFLK…EAPQETGHTK (79 aa)) are domain II. Positions 143-147 (ARSNK) are flexible linker. Positions 148–198 (AGNTQLDEAIEALLALGYTATELKKIRAFFEGTSETAEQYIKSALKLLMKG) are domain III.

This sequence belongs to the RuvA family. Homotetramer. Forms an RuvA(8)-RuvB(12)-Holliday junction (HJ) complex. HJ DNA is sandwiched between 2 RuvA tetramers; dsDNA enters through RuvA and exits via RuvB. An RuvB hexamer assembles on each DNA strand where it exits the tetramer. Each RuvB hexamer is contacted by two RuvA subunits (via domain III) on 2 adjacent RuvB subunits; this complex drives branch migration. In the full resolvosome a probable DNA-RuvA(4)-RuvB(12)-RuvC(2) complex forms which resolves the HJ.

The protein resides in the cytoplasm. In terms of biological role, the RuvA-RuvB-RuvC complex processes Holliday junction (HJ) DNA during genetic recombination and DNA repair, while the RuvA-RuvB complex plays an important role in the rescue of blocked DNA replication forks via replication fork reversal (RFR). RuvA specifically binds to HJ cruciform DNA, conferring on it an open structure. The RuvB hexamer acts as an ATP-dependent pump, pulling dsDNA into and through the RuvAB complex. HJ branch migration allows RuvC to scan DNA until it finds its consensus sequence, where it cleaves and resolves the cruciform DNA. The chain is Holliday junction branch migration complex subunit RuvA from Streptococcus pyogenes serotype M49 (strain NZ131).